The sequence spans 248 residues: Deoxyribose-phosphate aldolase (248 aa).

Residue aspartate 117 is the Proton donor/acceptor of the active site. The active-site Schiff-base intermediate with acetaldehyde is the lysine 179. Lysine 208 functions as the Proton donor/acceptor in the catalytic mechanism.

The protein belongs to the DeoC/FbaB aldolase family. DeoC type 1 subfamily.

It is found in the cytoplasm. It carries out the reaction 2-deoxy-D-ribose 5-phosphate = D-glyceraldehyde 3-phosphate + acetaldehyde. It functions in the pathway carbohydrate degradation; 2-deoxy-D-ribose 1-phosphate degradation; D-glyceraldehyde 3-phosphate and acetaldehyde from 2-deoxy-alpha-D-ribose 1-phosphate: step 2/2. Functionally, catalyzes a reversible aldol reaction between acetaldehyde and D-glyceraldehyde 3-phosphate to generate 2-deoxy-D-ribose 5-phosphate. This Thermotoga sp. (strain RQ2) protein is Deoxyribose-phosphate aldolase.